The following is a 776-amino-acid chain: Mitochondrial intermediate peptidase (776 aa).

Residues 1-28 (MRRFSTLSRRLQRVVPASSASTANTSPS) constitute a mitochondrion transit peptide. Histidine 561 contacts Zn(2+). The active site involves glutamate 562. 2 residues coordinate Zn(2+): histidine 565 and histidine 568.

Belongs to the peptidase M3 family. The cofactor is Zn(2+).

Its subcellular location is the mitochondrion matrix. It carries out the reaction Release of an N-terminal octapeptide as second stage of processing of some proteins imported into the mitochondrion.. In terms of biological role, cleaves proteins, imported into the mitochondrion, to their mature size. While most mitochondrial precursor proteins are processed to the mature form in one step by mitochondrial processing peptidase (MPP), the sequential cleavage by MIP of an octapeptide after initial processing by MPP is a required step for a subgroup of nuclear-encoded precursor proteins destined for the matrix or the inner membrane. The protein is Mitochondrial intermediate peptidase (OCT1) of Yarrowia lipolytica (strain CLIB 122 / E 150) (Yeast).